We begin with the raw amino-acid sequence, 155 residues long: Large-conductance mechanosensitive channel (155 aa).

2 helical membrane-spanning segments follow: residues 25–45 (VLDLAVGVIIGGAFGKIVTSL) and 98–118 (GDFITQAVNFVIVAFIIFLIV).

It belongs to the MscL family. In terms of assembly, homopentamer.

It localises to the cell inner membrane. Functionally, channel that opens in response to stretch forces in the membrane lipid bilayer. May participate in the regulation of osmotic pressure changes within the cell. This chain is Large-conductance mechanosensitive channel, found in Novosphingobium aromaticivorans (strain ATCC 700278 / DSM 12444 / CCUG 56034 / CIP 105152 / NBRC 16084 / F199).